A 283-amino-acid polypeptide reads, in one-letter code: Pantothenate synthetase (283 aa).

Residue 30 to 37 participates in ATP binding; sequence MGNLHAGH. Residue histidine 37 is the Proton donor of the active site. A (R)-pantoate-binding site is contributed by glutamine 61. Residue glutamine 61 coordinates beta-alanine. Residue 149 to 152 coordinates ATP; the sequence is GEKD. Glutamine 155 lines the (R)-pantoate pocket. Residues valine 178 and 186 to 189 contribute to the ATP site; that span reads LSSR.

This sequence belongs to the pantothenate synthetase family. In terms of assembly, homodimer.

The protein resides in the cytoplasm. It carries out the reaction (R)-pantoate + beta-alanine + ATP = (R)-pantothenate + AMP + diphosphate + H(+). It participates in cofactor biosynthesis; (R)-pantothenate biosynthesis; (R)-pantothenate from (R)-pantoate and beta-alanine: step 1/1. In terms of biological role, catalyzes the condensation of pantoate with beta-alanine in an ATP-dependent reaction via a pantoyl-adenylate intermediate. This Pseudomonas paraeruginosa (strain DSM 24068 / PA7) (Pseudomonas aeruginosa (strain PA7)) protein is Pantothenate synthetase.